Here is a 92-residue protein sequence, read N- to C-terminus: Non-specific lipid-transfer protein A (92 aa).

Intrachain disulfides connect Cys-3–Cys-51, Cys-13–Cys-28, Cys-29–Cys-74, and Cys-49–Cys-88.

Belongs to the plant LTP family.

Plant non-specific lipid-transfer proteins transfer phospholipids as well as galactolipids across membranes. May play a role in wax or cutin deposition in the cell walls of expanding epidermal cells and certain secretory tissues. The protein is Non-specific lipid-transfer protein A of Ricinus communis (Castor bean).